The primary structure comprises 246 residues: tRNA (guanine-N(1)-)-methyltransferase (246 aa).

Residues Gly114 and 134–139 (IGDYIL) contribute to the S-adenosyl-L-methionine site.

Belongs to the RNA methyltransferase TrmD family. As to quaternary structure, homodimer.

Its subcellular location is the cytoplasm. It carries out the reaction guanosine(37) in tRNA + S-adenosyl-L-methionine = N(1)-methylguanosine(37) in tRNA + S-adenosyl-L-homocysteine + H(+). Its function is as follows. Specifically methylates guanosine-37 in various tRNAs. The sequence is that of tRNA (guanine-N(1)-)-methyltransferase from Coxiella burnetii (strain RSA 331 / Henzerling II).